The primary structure comprises 548 residues: Probable malate:quinone oxidoreductase (548 aa).

Residues aspartate 521–leucine 548 are disordered. Basic and acidic residues predominate over residues valine 539–leucine 548.

Belongs to the MQO family. It depends on FAD as a cofactor.

It catalyses the reaction (S)-malate + a quinone = a quinol + oxaloacetate. It functions in the pathway carbohydrate metabolism; tricarboxylic acid cycle; oxaloacetate from (S)-malate (quinone route): step 1/1. The sequence is that of Probable malate:quinone oxidoreductase from Escherichia coli (strain ATCC 8739 / DSM 1576 / NBRC 3972 / NCIMB 8545 / WDCM 00012 / Crooks).